The sequence spans 744 residues: Phosphoribosylformylglycinamidine synthase subunit PurL (744 aa).

His-50 is a catalytic residue. The ATP site is built by Tyr-53 and Lys-92. A Mg(2+)-binding site is contributed by Glu-94. Substrate is bound by residues 95 to 98 (SHNH) and Arg-117. The active-site Proton acceptor is His-96. Asp-118 is a Mg(2+) binding site. Gln-241 lines the substrate pocket. Mg(2+) is bound at residue Asp-269. 313–315 (ESQ) provides a ligand contact to substrate. Positions 494 and 531 each coordinate ATP. Residue Asn-532 participates in Mg(2+) binding. Position 534 (Ser-534) interacts with substrate.

The protein belongs to the FGAMS family. Monomer. Part of the FGAM synthase complex composed of 1 PurL, 1 PurQ and 2 PurS subunits.

Its subcellular location is the cytoplasm. The catalysed reaction is N(2)-formyl-N(1)-(5-phospho-beta-D-ribosyl)glycinamide + L-glutamine + ATP + H2O = 2-formamido-N(1)-(5-O-phospho-beta-D-ribosyl)acetamidine + L-glutamate + ADP + phosphate + H(+). The protein operates within purine metabolism; IMP biosynthesis via de novo pathway; 5-amino-1-(5-phospho-D-ribosyl)imidazole from N(2)-formyl-N(1)-(5-phospho-D-ribosyl)glycinamide: step 1/2. In terms of biological role, part of the phosphoribosylformylglycinamidine synthase complex involved in the purines biosynthetic pathway. Catalyzes the ATP-dependent conversion of formylglycinamide ribonucleotide (FGAR) and glutamine to yield formylglycinamidine ribonucleotide (FGAM) and glutamate. The FGAM synthase complex is composed of three subunits. PurQ produces an ammonia molecule by converting glutamine to glutamate. PurL transfers the ammonia molecule to FGAR to form FGAM in an ATP-dependent manner. PurS interacts with PurQ and PurL and is thought to assist in the transfer of the ammonia molecule from PurQ to PurL. This chain is Phosphoribosylformylglycinamidine synthase subunit PurL, found in Chelativorans sp. (strain BNC1).